The primary structure comprises 468 residues: Lactate utilization protein B (468 aa).

4Fe-4S ferredoxin-type domains are found at residues 303–333 and 352–381; these read GTQF…GHAY and YENY…LHEL. The [4Fe-4S] cluster site is built by cysteine 312, cysteine 315, cysteine 318, cysteine 322, cysteine 365, cysteine 368, and cysteine 372. Positions 442 to 468 are disordered; it reads PAWTDSKDLPQPNKQTVRDWFKKRGNA. Basic and acidic residues predominate over residues 457 to 468; it reads TVRDWFKKRGNA.

The protein belongs to the LutB/YkgF family.

Is involved in L-lactate degradation and allows cells to grow with lactate as the sole carbon source. Has probably a role as an electron transporter during oxidation of L-lactate. This is Lactate utilization protein B from Exiguobacterium sp. (strain ATCC BAA-1283 / AT1b).